The following is a 734-amino-acid chain: Cytosolic endo-beta-N-acetylglucosaminidase (734 aa).

Residue methionine 1 is modified to N-acetylmethionine. The tract at residues 1–45 is disordered; that stretch reads METSSVLTRGAARQRSPAAPEKQARDQTERRPGRRRQGRRINEDQ. The segment covering 22-31 has biased composition (basic and acidic residues); that stretch reads KQARDQTERR. The region spanning 281–375 is the BRCT domain; it reads QNRVFFDSCD…DFFQNQDKFW (95 aa).

This sequence belongs to the glycosyl hydrolase 85 family.

The protein resides in the cytoplasm. The protein localises to the cytosol. It catalyses the reaction an N(4)-(oligosaccharide-(1-&gt;3)-[oligosaccharide-(1-&gt;6)]-beta-D-Man-(1-&gt;4)-beta-D-GlcNAc-(1-&gt;4)-alpha-D-GlcNAc)-L-asparaginyl-[protein] + H2O = an oligosaccharide-(1-&gt;3)-[oligosaccharide-(1-&gt;6)]-beta-D-Man-(1-&gt;4)-D-GlcNAc + N(4)-(N-acetyl-beta-D-glucosaminyl)-L-asparaginyl-[protein]. In terms of biological role, endoglycosidase that releases N-glycans from glycoproteins by cleaving the beta-1,4-glycosidic bond in the N,N'-diacetylchitobiose core. Involved in the processing of free oligosaccharides in the cytosol. The protein is Cytosolic endo-beta-N-acetylglucosaminidase (Engase) of Mus musculus (Mouse).